Here is a 215-residue protein sequence, read N- to C-terminus: Cytochrome b6 (215 aa).

A helical transmembrane segment spans residues 32–52 (IFYCLGGITLTCFLIQFATGF). Cys35 serves as a coordination point for heme c. His86 and His100 together coordinate heme b. Transmembrane regions (helical) follow at residues 90 to 110 (ASMM…TGGF), 116 to 136 (LTWV…VTGY), and 186 to 206 (AHTF…FLMI). Positions 187 and 202 each coordinate heme b.

This sequence belongs to the cytochrome b family. PetB subfamily. In terms of assembly, the 4 large subunits of the cytochrome b6-f complex are cytochrome b6, subunit IV (17 kDa polypeptide, PetD), cytochrome f and the Rieske protein, while the 4 small subunits are PetG, PetL, PetM and PetN. The complex functions as a dimer. Requires heme b as cofactor. It depends on heme c as a cofactor.

It localises to the cellular thylakoid membrane. Component of the cytochrome b6-f complex, which mediates electron transfer between photosystem II (PSII) and photosystem I (PSI), cyclic electron flow around PSI, and state transitions. This chain is Cytochrome b6, found in Desmonostoc sp. (strain PCC 7906) (Nostoc sp. (strain PCC 7906)).